The chain runs to 648 residues: DNA gyrase subunit B (648 aa).

Positions 427-541 (TELFIVEGDS…AGYVYIAQPP (115 aa)) constitute a Toprim domain. Glu433, Asp506, and Asp508 together coordinate Mg(2+).

Belongs to the type II topoisomerase GyrB family. Heterotetramer, composed of two GyrA and two GyrB chains. In the heterotetramer, GyrA contains the active site tyrosine that forms a transient covalent intermediate with DNA, while GyrB binds cofactors and catalyzes ATP hydrolysis. It depends on Mg(2+) as a cofactor. Mn(2+) serves as cofactor. The cofactor is Ca(2+).

It is found in the cytoplasm. The catalysed reaction is ATP-dependent breakage, passage and rejoining of double-stranded DNA.. A type II topoisomerase that negatively supercoils closed circular double-stranded (ds) DNA in an ATP-dependent manner to modulate DNA topology and maintain chromosomes in an underwound state. Negative supercoiling favors strand separation, and DNA replication, transcription, recombination and repair, all of which involve strand separation. Also able to catalyze the interconversion of other topological isomers of dsDNA rings, including catenanes and knotted rings. Type II topoisomerases break and join 2 DNA strands simultaneously in an ATP-dependent manner. This Streptococcus pneumoniae serotype 4 (strain ATCC BAA-334 / TIGR4) protein is DNA gyrase subunit B.